A 217-amino-acid chain; its full sequence is MKRQSALVVFSGGQDSTTCLFWAMKHYEYVETVTFSYGQRHSQELEVAKEIAAEQGVKHHILDMSLLGQITENALTSDIAIETKDGEVPNTFVDGRNHLFLSFAAVLAKQRKIRDIVTGVCQTDFSGYPDCRDVFVKSLNVTLNLAMDYEFVIQTPLMWLDKAETWELADQLGKFDYVRQKTLTCYNGIRGTGCRQCPACHLRQAGLEKYLSQKGKN.

Residue 10 to 20 (FSGGQDSTTCL) participates in ATP binding. Residues Cys-185, Cys-194, Cys-197, and Cys-200 each contribute to the Zn(2+) site.

Belongs to the QueC family. As to quaternary structure, homodimer. Requires Zn(2+) as cofactor.

It carries out the reaction 7-carboxy-7-deazaguanine + NH4(+) + ATP = 7-cyano-7-deazaguanine + ADP + phosphate + H2O + H(+). It participates in purine metabolism; 7-cyano-7-deazaguanine biosynthesis. Functionally, catalyzes the ATP-dependent conversion of 7-carboxy-7-deazaguanine (CDG) to 7-cyano-7-deazaguanine (preQ(0)). This Streptococcus mutans serotype c (strain ATCC 700610 / UA159) protein is 7-cyano-7-deazaguanine synthase.